The chain runs to 79 residues: MKEQIFDIIETISGTDEFREDLDMDLFEEGILDSMRAIMLIVELEGAFDISLPPSEMDREDWNTANKIAARVQEKTDEN.

In terms of domain architecture, Carrier spans 1-76; it reads MKEQIFDIIE…KIAARVQEKT (76 aa). Ser34 carries the post-translational modification O-(pantetheine 4'-phosphoryl)serine.

The protein belongs to the DltC family. 4'-phosphopantetheine is transferred from CoA to a specific serine of apo-DCP.

The protein resides in the cytoplasm. The protein operates within cell wall biogenesis; lipoteichoic acid biosynthesis. In terms of biological role, carrier protein involved in the D-alanylation of lipoteichoic acid (LTA). The loading of thioester-linked D-alanine onto DltC is catalyzed by D-alanine--D-alanyl carrier protein ligase DltA. The DltC-carried D-alanyl group is further transferred to cell membrane phosphatidylglycerol (PG) by forming an ester bond, probably catalyzed by DltD. D-alanylation of LTA plays an important role in modulating the properties of the cell wall in Gram-positive bacteria, influencing the net charge of the cell wall. In Lactococcus lactis subsp. cremoris (strain SK11), this protein is D-alanyl carrier protein.